Here is a 411-residue protein sequence, read N- to C-terminus: Protein-lysine 6-oxidase (411 aa).

The first 21 residues, 1–21 (MRFAWTVLFLGQLQFCPLLRC), serve as a signal peptide directing secretion. A propeptide spans 22 to 162 (APQAPREPPA…PPSHVDRMVG (141 aa)) (removed by BMP1). Positions 60–168 (PQRRRDSSAT…RMVGDDPYNP (109 aa)) are disordered. N-linked (GlcNAc...) asparagine glycosylation is found at N91 and N138. Y181 is subject to Sulfotyrosine. The interval 207–411 (PDLVPDPYYI…YASGCTISPY (205 aa)) is lysyl-oxidase like. 5 cysteine pairs are disulfide-bonded: C232/C238, C285/C334, C318/C324, C345/C355, and C392/C406. Residues H286, H288, and H290 each coordinate Cu cation. Residues 314–349 (KASFCLEDTSCDYGYHRRFACTAHTQGLSPGCYDTY) constitute a cross-link (lysine tyrosylquinone (Lys-Tyr)). Y349 is modified (2',4',5'-topaquinone).

This sequence belongs to the lysyl oxidase family. In terms of assembly, interacts with MFAP4. Interacts (via propeptide) with EFEMP2; this interaction is strong and facilitates formation of ternary complexes with ELN during elastic fiber assembly; this interaction limits interaction of EFEMP2 with FBLN5. It depends on Cu cation as a cofactor. The cofactor is lysine tyrosylquinone residue. Post-translationally, the lysine tyrosylquinone cross-link (LTQ) is generated by condensation of the epsilon-amino group of a lysine with a topaquinone produced by oxidation of tyrosine. In terms of processing, proteolytically cleaved by BMP1 which removes the propeptide. Also proteolytically cleaved by ADAMTS2 and ADAMTS14, but not by ADAMTS3, at an additional cleavage site downstream of the BMP1 cleavage site. The propeptide plays a role in directing the deposition of this enzyme to elastic fibers, via interaction with tropoelastin. Cleavage by BMP1 to remove the propeptide does not increase enzymatic activity but increases binding to collagen. Cleavage by ADAMTS2 produces a form with reduced collagen-binding activity. Sulfated at Tyr-181 and also at either Tyr-177 or Tyr-178 which enhances binding to collagen. Aorta and lung.

It localises to the secreted. The protein localises to the extracellular space. It carries out the reaction L-lysyl-[protein] + O2 + H2O = (S)-2-amino-6-oxohexanoyl-[protein] + H2O2 + NH4(+). Its function is as follows. Responsible for the post-translational oxidative deamination of peptidyl lysine residues in precursors to fibrous collagen and elastin. Regulator of Ras expression. May play a role in tumor suppression. Plays a role in the aortic wall architecture. The chain is Protein-lysine 6-oxidase from Rattus norvegicus (Rat).